A 279-amino-acid polypeptide reads, in one-letter code: Zinc-finger homeodomain protein 1 (279 aa).

Over residues 1–13 (MDFDDHDDGDEEM) the composition is skewed to acidic residues. The tract at residues 1–47 (MDFDDHDDGDEEMPPMPVSSSYETPPQHGLAGGGMAPKPPGEIGSHV) is disordered. The ZF-HD dimerization-type; degenerate zinc-finger motif lies at 57–106 (YRECLKNHAVGIGGHAVDGCGEFMAAGEEGTIDALRCAACNCHRNFHRKE). The interval 157 to 191 (AAAAAAGGHPQRPLALPSTSHSGRDDGDDLSGMVG) is disordered. The segment at residues 215–278 (KKRFRTKFTQ…NNKHTLGKKL (64 aa)) is a DNA-binding region (homeobox).

Homo- and heterodimer with other ZFHD proteins.

It is found in the nucleus. In terms of biological role, putative transcription factor. The chain is Zinc-finger homeodomain protein 1 (ZHD1) from Oryza sativa subsp. indica (Rice).